Reading from the N-terminus, the 346-residue chain is L-glyceraldehyde 3-phosphate reductase (346 aa).

Residues tryptophan 33, aspartate 61, tyrosine 66, serine 168, glutamine 193, threonine 223, leucine 225, glutamine 227, lysine 233, serine 303, glutamine 307, and asparagine 311 each coordinate NADP(+).

This sequence belongs to the shaker potassium channel beta subunit family. As to quaternary structure, homotetramer. Homooctamer.

It carries out the reaction a primary alcohol + NADP(+) = an aldehyde + NADPH + H(+). It catalyses the reaction hydroxyacetone + NADP(+) = methylglyoxal + NADPH + H(+). Its function is as follows. Aldo-keto reductase that catalyzes the stereospecific, NADPH-dependent reduction of L-glyceraldehyde 3-phosphate (L-GAP) to L-glycerol 3-phosphate (L-G3P). The physiological role of Gpr is the detoxification of L-GAP, which may be formed via non-enzymatic and/or enzymatic racemization of D-GAP. Also contributes to cellular methylglyoxal detoxification by catalyzing the NADPH-dependent conversion of methylglyoxal to acetol. However, the catalytic efficiency of methylglyoxal reductase activity is more than 2 orders of magnitude lower than the L-GAP reductase activity. In addition, exhibits activity with glyoxal and probably plays a significant role in detoxification of glyoxal in vivo. Shows broad specificity and can use aromatic aldehydes such as 4-nitrobenzaldehyde and benzaldehyde, D,L-glyceraldehyde, phenylglyoxal, isatin and the model substrate 4-nitrobenzaldehyde. In Escherichia coli (strain K12), this protein is L-glyceraldehyde 3-phosphate reductase.